A 284-amino-acid chain; its full sequence is Halorhodopsin (284 aa).

The Extracellular segment spans residues 1 to 30 (MIETAAADILAGGMVPLEMTQTQIFEAVQS). A helical transmembrane segment spans residues 31–56 (DTLLASSLWINIALAGLSILLFVYMG). The Cytoplasmic portion of the chain corresponds to 57 to 62 (RNVEDP). A helical transmembrane segment spans residues 63–86 (RAQLIFVATLMVPLVSISSYTGLV). At 87–110 (SGLTVSFLEMPAGHALAGQEVLTP) the chain is on the extracellular side. A helical membrane pass occupies residues 111–132 (WGRYLTWALSTPMILIAVGLLA). At 133–135 (GSN) the chain is on the cytoplasmic side. A helical membrane pass occupies residues 136–159 (TTKLFTAVVADIGMCVTGLAAALT). The Extracellular portion of the chain corresponds to 160–162 (TSS). A helical transmembrane segment spans residues 163 to 185 (YLLRWVWYAISCAFFVVVLYILL). Topologically, residues 186–197 (AEWAEDAEIAGT) are cytoplasmic. Residues 198–221 (ADIFNTLKVLTVVLWLGYPIFWAL) traverse the membrane as a helical segment. The Extracellular segment spans residues 222–230 (GAEGLAVLD). A helical membrane pass occupies residues 231-259 (VAITSWAYSGMDIVAKYLFAFLLLRWVVN). Lysine 246 carries the post-translational modification N6-(retinylidene)lysine. Topologically, residues 260–284 (NERTVADVASGLGSGSRGGAAPADD) are cytoplasmic.

The protein belongs to the archaeal/bacterial/fungal opsin family.

The protein resides in the cell membrane. In terms of biological role, light-driven chloride pump. In Halobacterium sp. (strain SG1), this protein is Halorhodopsin (hop).